The chain runs to 220 residues: Redox-sensing transcriptional repressor Rex (220 aa).

A DNA-binding region (H-T-H motif) is located at residues Trp25–Val64. Gly99–Gly104 contacts NAD(+).

It belongs to the transcriptional regulatory Rex family. As to quaternary structure, homodimer.

Its subcellular location is the cytoplasm. Functionally, modulates transcription in response to changes in cellular NADH/NAD(+) redox state. The sequence is that of Redox-sensing transcriptional repressor Rex from Bacteroides fragilis (strain ATCC 25285 / DSM 2151 / CCUG 4856 / JCM 11019 / LMG 10263 / NCTC 9343 / Onslow / VPI 2553 / EN-2).